Here is an 860-residue protein sequence, read N- to C-terminus: Leucine--tRNA ligase (860 aa).

The 'HIGH' region motif lies at 42–52; sequence PYPSGRLHMGH. The short motif at 619–623 is the 'KMSKS' region element; that stretch reads KMSKS. ATP is bound at residue Lys622.

Belongs to the class-I aminoacyl-tRNA synthetase family.

The protein localises to the cytoplasm. It catalyses the reaction tRNA(Leu) + L-leucine + ATP = L-leucyl-tRNA(Leu) + AMP + diphosphate. This is Leucine--tRNA ligase from Escherichia coli O81 (strain ED1a).